Consider the following 62-residue polypeptide: Photosystem II reaction center protein Z (62 aa).

2 helical membrane passes run Ala8 to Ala28 and Tyr41 to Val61.

Belongs to the PsbZ family. PSII is composed of 1 copy each of membrane proteins PsbA, PsbB, PsbC, PsbD, PsbE, PsbF, PsbH, PsbI, PsbJ, PsbK, PsbL, PsbM, PsbT, PsbX, PsbY, PsbZ, Psb30/Ycf12, peripheral proteins PsbO, CyanoQ (PsbQ), PsbU, PsbV and a large number of cofactors. It forms dimeric complexes.

The protein resides in the cellular thylakoid membrane. In terms of biological role, may control the interaction of photosystem II (PSII) cores with the light-harvesting antenna, regulates electron flow through the 2 photosystem reaction centers. PSII is a light-driven water plastoquinone oxidoreductase, using light energy to abstract electrons from H(2)O, generating a proton gradient subsequently used for ATP formation. The sequence is that of Photosystem II reaction center protein Z from Rippkaea orientalis (strain PCC 8801 / RF-1) (Cyanothece sp. (strain PCC 8801)).